Reading from the N-terminus, the 203-residue chain is Glutathione S-transferase 2 (203 aa).

Residues 1 to 78 form the GST N-terminal domain; that stretch reads MPKVVFHYFG…YLGRKYGLAG (78 aa). Glutathione is bound by residues Y8, W38, K42, 48-50, and 62-63; these read GQM and QS. Positions 80-203 constitute a GST C-terminal domain; sequence DIEEDFEIDQ…YLDSAPKKEF (124 aa).

The protein belongs to the GST superfamily. Sigma family. In terms of assembly, homodimer.

The enzyme catalyses RX + glutathione = an S-substituted glutathione + a halide anion + H(+). Its function is as follows. Conjugation of reduced glutathione to a wide number of exogenous and endogenous hydrophobic electrophiles. This Manduca sexta (Tobacco hawkmoth) protein is Glutathione S-transferase 2 (GST2).